Here is a 952-residue protein sequence, read N- to C-terminus: Glutamate receptor 2.7 (952 aa).

Positions 1-32 are cleaved as a signal peptide; the sequence is MKVMNPRKTNNTFMYYFVLFVCGFVLMEGCLG. At 33-582 the chain is on the extracellular side; the sequence is QNQTTEIKVG…NTWVFLRPWS (550 aa). Residues Asn34, Asn60, Asn355, Asn428, and Asn546 are each glycosylated (N-linked (GlcNAc...) asparagine). The chain crosses the membrane as a helical span at residues 583–603; sequence LDLWVTTACFFVFIGFIVWIL. The Cytoplasmic segment spans residues 604 to 612; the sequence is EHRVNTDFR. Residues 613–633 form a helical membrane-spanning segment; it reads GPPHHQIGTSFWFAFSTMNFA. The Cytoplasmic portion of the chain corresponds to 634-637; sequence HREK. Residues 638–658 form a helical membrane-spanning segment; the sequence is VVSNLARFVVLVWCFVVLVLI. Topologically, residues 659-821 are extracellular; the sequence is QSYTANLTSF…LSSNHLSLSS (163 aa). Asn664, Asn728, Asn748, Asn784, and Asn809 each carry an N-linked (GlcNAc...) asparagine glycan. A helical transmembrane segment spans residues 822–842; sequence FWGLFLIAGIASFLALLIFVA. Topologically, residues 843-952 are cytoplasmic; sequence NFLYEHKHTL…ESAIIQCEGE (110 aa). Residues 889-908 are compositionally biased toward polar residues; that stretch reads VSSPITQGSSSPLTDQSTPL. Disordered regions lie at residues 889-914 and 932-952; these read VSSPITQGSSSPLTDQSTPLPRSPEQ and FTTQSEQVEDEESAIIQCEGE.

It belongs to the glutamate-gated ion channel (TC 1.A.10.1) family. May form heteromers. As to expression, expressed predominantly in leaves.

It is found in the membrane. In terms of biological role, glutamate-gated receptor that probably acts as a non-selective cation channel. May be involved in light-signal transduction and calcium homeostasis via the regulation of calcium influx into cells. The protein is Glutamate receptor 2.7 (GLR2.7) of Arabidopsis thaliana (Mouse-ear cress).